A 93-amino-acid chain; its full sequence is Cell division protein CrgA (93 aa).

2 helical membrane passes run V31–F51 and L70–M90.

This sequence belongs to the CrgA family.

It localises to the cell membrane. In terms of biological role, involved in cell division. The sequence is that of Cell division protein CrgA from Mycobacterium avium (strain 104).